Reading from the N-terminus, the 403-residue chain is Leu/Ile/Val-binding protein homolog 8 (403 aa).

A signal peptide spans 1 to 26; that stretch reads MRLSRLLIGASLGVALSSTVFTAALA.

Belongs to the leucine-binding protein family.

In terms of biological role, component of an amino-acid transport system. The chain is Leu/Ile/Val-binding protein homolog 8 from Brucella abortus (strain 2308).